A 281-amino-acid polypeptide reads, in one-letter code: Pantothenate synthetase (281 aa).

30–37 (MGYLHEGH) is an ATP binding site. His-37 (proton donor) is an active-site residue. Gln-61 serves as a coordination point for (R)-pantoate. Residue Gln-61 coordinates beta-alanine. An ATP-binding site is contributed by 147–150 (GEKD). Gln-153 serves as a coordination point for (R)-pantoate. ATP is bound by residues Ile-176 and 184–187 (KSSR).

It belongs to the pantothenate synthetase family. As to quaternary structure, homodimer.

It is found in the cytoplasm. The enzyme catalyses (R)-pantoate + beta-alanine + ATP = (R)-pantothenate + AMP + diphosphate + H(+). Its pathway is cofactor biosynthesis; (R)-pantothenate biosynthesis; (R)-pantothenate from (R)-pantoate and beta-alanine: step 1/1. Its function is as follows. Catalyzes the condensation of pantoate with beta-alanine in an ATP-dependent reaction via a pantoyl-adenylate intermediate. The protein is Pantothenate synthetase of Clostridium botulinum (strain Okra / Type B1).